We begin with the raw amino-acid sequence, 519 residues long: Asteroid homolog 1 (519 aa).

This sequence belongs to the asteroid family.

Its subcellular location is the cytoplasm. The protein resides in the mitochondrion. In Schizosaccharomyces pombe (strain 972 / ATCC 24843) (Fission yeast), this protein is Asteroid homolog 1 (ast1).